Reading from the N-terminus, the 233-residue chain is Protein-methionine-sulfoxide reductase heme-binding subunit MsrQ (233 aa).

Transmembrane regions (helical) follow at residues 13-33, 44-64, 81-101, 117-137, 151-171, and 174-194; these read IKAA…HGLW, ALTR…LCVS, MLGL…LWLD, PFIT…LTSS, SLHR…LWLV, and VALL…GWRV. The Ferric oxidoreductase domain maps to 50-164; the sequence is GIWTLNFLFL…AVYAVAILGV (115 aa).

It belongs to the MsrQ family. As to quaternary structure, heterodimer of a catalytic subunit (MsrP) and a heme-binding subunit (MsrQ).

Its subcellular location is the cell inner membrane. Its function is as follows. Part of the MsrPQ system that repairs oxidized periplasmic proteins containing methionine sulfoxide residues (Met-O), using respiratory chain electrons. Thus protects these proteins from oxidative-stress damage caused by reactive species of oxygen and chlorine generated by the host defense mechanisms. MsrPQ is essential for the maintenance of envelope integrity under bleach stress, rescuing a wide series of structurally unrelated periplasmic proteins from methionine oxidation. MsrQ provides electrons for reduction to the reductase catalytic subunit MsrP, using the quinone pool of the respiratory chain. Probably involved in protection against reactive chlorine species (RCS) generated by chlorite and hypochlorite. The chain is Protein-methionine-sulfoxide reductase heme-binding subunit MsrQ from Azospira oryzae (strain ATCC BAA-33 / DSM 13638 / PS) (Dechlorosoma suillum).